The following is a 237-amino-acid chain: Demethylmenaquinone methyltransferase (237 aa).

S-adenosyl-L-methionine is bound by residues Thr-58, Asp-79, and 106 to 107 (NA).

It belongs to the class I-like SAM-binding methyltransferase superfamily. MenG/UbiE family.

The enzyme catalyses a 2-demethylmenaquinol + S-adenosyl-L-methionine = a menaquinol + S-adenosyl-L-homocysteine + H(+). Its pathway is quinol/quinone metabolism; menaquinone biosynthesis; menaquinol from 1,4-dihydroxy-2-naphthoate: step 2/2. Its function is as follows. Methyltransferase required for the conversion of demethylmenaquinol (DMKH2) to menaquinol (MKH2). The protein is Demethylmenaquinone methyltransferase of Bacillus mycoides (strain KBAB4) (Bacillus weihenstephanensis).